Consider the following 154-residue polypeptide: 6,7-dimethyl-8-ribityllumazine synthase (154 aa).

5-amino-6-(D-ribitylamino)uracil contacts are provided by residues F21, 55-57 (AFE), and 79-81 (CVI). Residue 84–85 (AT) coordinates (2S)-2-hydroxy-3-oxobutyl phosphate. Residue H87 is the Proton donor of the active site. Residue F111 coordinates 5-amino-6-(D-ribitylamino)uracil. R125 provides a ligand contact to (2S)-2-hydroxy-3-oxobutyl phosphate.

Belongs to the DMRL synthase family. In terms of assembly, forms an icosahedral capsid composed of 60 subunits, arranged as a dodecamer of pentamers.

The enzyme catalyses (2S)-2-hydroxy-3-oxobutyl phosphate + 5-amino-6-(D-ribitylamino)uracil = 6,7-dimethyl-8-(1-D-ribityl)lumazine + phosphate + 2 H2O + H(+). Its pathway is cofactor biosynthesis; riboflavin biosynthesis; riboflavin from 2-hydroxy-3-oxobutyl phosphate and 5-amino-6-(D-ribitylamino)uracil: step 1/2. Functionally, catalyzes the formation of 6,7-dimethyl-8-ribityllumazine by condensation of 5-amino-6-(D-ribitylamino)uracil with 3,4-dihydroxy-2-butanone 4-phosphate. This is the penultimate step in the biosynthesis of riboflavin. This chain is 6,7-dimethyl-8-ribityllumazine synthase, found in Macrococcus caseolyticus (strain JCSC5402) (Macrococcoides caseolyticum).